Here is a 253-residue protein sequence, read N- to C-terminus: ER membrane protein complex subunit 3 (253 aa).

A run of 3 helical transmembrane segments spans residues 10–30, 126–146, and 176–196; these read WVLLPISIVMVLTGVLKQYIM, FIPQTIIMWWVNHFFAGFILM, and SISWYFISVLGLNPVYNLIGL.

The protein belongs to the EMC3 family. Component of the ER membrane protein complex (EMC), which is composed of EMC1, EMC2, EMC3, EMC4, EMC5 and EMC6.

It localises to the endoplasmic reticulum membrane. The EMC seems to be required for efficient folding of proteins in the endoplasmic reticulum (ER). This chain is ER membrane protein complex subunit 3 (AIM27), found in Saccharomyces cerevisiae (strain RM11-1a) (Baker's yeast).